Here is a 107-residue protein sequence, read N- to C-terminus: Iron-binding protein IscA (107 aa).

Fe cation contacts are provided by Cys35, Cys99, and Cys101.

The protein belongs to the HesB/IscA family. As to quaternary structure, homodimer; may form tetramers and higher multimers. Fe cation is required as a cofactor.

Its function is as follows. Is able to transfer iron-sulfur clusters to apo-ferredoxin. Multiple cycles of [2Fe2S] cluster formation and transfer are observed, suggesting that IscA acts catalytically. Recruits intracellular free iron so as to provide iron for the assembly of transient iron-sulfur cluster in IscU in the presence of IscS, L-cysteine and the thioredoxin reductase system TrxA/TrxB. This Salmonella agona (strain SL483) protein is Iron-binding protein IscA.